A 946-amino-acid chain; its full sequence is Zinc finger CCCH-type antiviral protein 1 (946 aa).

Residues 1 to 254 form an N-terminal domain region; the sequence is MTDPEVFCFI…DRSKSRDRFH (254 aa). A Nuclear localization signal motif is present at residues 69–76; it reads RARVCRRK. 4 C3H1-type zinc fingers span residues 73 to 86, 87 to 113, 150 to 172, and 173 to 194; these read CRRKYCQRPCDSLH, LCKLNLLGRCHYAQSQRNLCKYSHDVL, CKSYKGEGRKQICGQPQPCERLH, and ICEHFTRGNCSYLNCLRSHNLM. Disordered regions lie at residues 221-283 and 302-354; these read NKHT…KDPL and RAQL…AAGF. The binding to EXOSC5 stretch occupies residues 224 to 254; sequence TRRNPPSMRAPHPHRRGGAHRDRSKSRDRFH. Residues 242 to 257 show a composition bias toward basic and acidic residues; the sequence is AHRDRSKSRDRFHHNS. Ser257 carries the phosphoserine modification. The residue at position 262 (Ser262) is a Phosphoserine; by GSK3-beta. Phosphoserine is present on residues Ser265, Ser269, and Ser273. Phosphothreonine is present on Thr277. The Nuclear export signal signature appears at 283–290; it reads LEDVSADV. Phosphoserine is present on residues Ser324 and Ser350. A Nuclear localization signal motif is present at residues 412–413; it reads KR. Ser425 carries the post-translational modification Phosphoserine. Positions 461-491 are disordered; sequence NPAWPGTSTHNGPNGFSQIMDETPNVSKSSP. Polar residues predominate over residues 466 to 477; the sequence is GTSTHNGPNGFS. The residue at position 508 (Tyr508) is a Phosphotyrosine. A disordered region spans residues 523–570; that stretch reads GETTTPVQGSNRLPPSPLSSSTSHRVAASGSPGKSSTHASVSPASEPS. Residues 524 to 533 show a composition bias toward polar residues; that stretch reads ETTTPVQGSN. A Phosphoserine modification is found at Ser553. A compositionally biased stretch (polar residues) spans 554 to 567; sequence PGKSSTHASVSPAS. A phosphoserine mark is found at Ser583 and Ser680. In terms of domain architecture, WWE spans 684–771; it reads FVEKTLNSVF…ASKTQRHVVR (88 aa). In terms of domain architecture, PARP catalytic spans 805–946; sequence SPQRNASTVS…SLDSSGLQRK (142 aa).

This sequence belongs to the ARTD/PARP family. In terms of assembly, homodimer or homooligomer. Homooligomerization is essential for its antiviral activity. Interacts with EXOSC5. Interacts (via N-terminal domain) with DDX17 in an RNA-independent manner. Interacts with EXOSC3, EXOSC7, DCP2 and DCP1A. Interacts with PARN in an RNA-independent manner. Interacts with XRN1 in an RNA-dependent manner. Interacts (via N-terminal domain) with DHX30 (via N-terminus) in an RNA-independent manner. Isoform 2 interacts (via zinc-fingers) with RIGI in an RNA-dependent manner. In terms of processing, phosphorylation at Ser-273 is essential for sequential phosphorylation of Ser-269, Ser-265, Ser-262 and Ser-257 by GSK3-beta. Phosphorylation by GSK3-beta enhances its antiviral activity.

The protein resides in the cytoplasm. It is found in the nucleus. Functionally, antiviral protein which inhibits the replication of viruses by recruiting the cellular RNA degradation machineries to degrade the viral mRNAs. Binds to a ZAP-responsive element (ZRE) present in the target viral mRNA, recruits cellular poly(A)-specific ribonuclease PARN to remove the poly(A) tail, and the 3'-5' exoribonuclease complex exosome to degrade the RNA body from the 3'-end. It also recruits the decapping complex DCP1-DCP2 through RNA helicase p72 (DDX17) to remove the cap structure of the viral mRNA to initiate its degradation from the 5'-end. Its target viruses belong to families which include retroviridae: human immunodeficiency virus type 1 (HIV-1) and moloney and murine leukemia virus (MoMLV), filoviridae: ebola virus (EBOV) and marburg virus (MARV), togaviridae: sindbis virus (SINV) and Ross river virus (RRV). Specifically targets the multiply spliced but not unspliced or singly spliced HIV-1 mRNAs for degradation. Isoform 1 is a more potent viral inhibitor than isoform 2. Isoform 2 acts as a positive regulator of RIG-I signaling resulting in activation of the downstream effector IRF3 leading to the expression of type I IFNs and IFN stimulated genes (ISGs). The polypeptide is Zinc finger CCCH-type antiviral protein 1 (Zc3hav1) (Mus musculus (Mouse)).